The sequence spans 379 residues: MPILSTEIFNEADAGFVYQSNSNDYSDGFEGPEKKLDIRFGPISKGSVKSIAGSPSKVGLRTIDKEKWQTVLDSARCTIISQTSNDHMDSYVLSESSLFVYPRRAMIKTCGTTTLLHLIAKMVQVGKECGLEVEMVVFSRKNLNQPSKQVFPHCSFSDEVNFLNKIFDGQAYVMGDVNKDHWNLYIADFRKNPTLQRTEQTFEVMMHDLDETVMKQFFKREGVSAWDTTVNSGIADLLPGSMIDDFQFDPCGYSMNGLLNEFYWTIHITPESHCSYVSFDTNVALADYNQLLAKVLNVFKPGRFTAALYAEDGAPCGDPYTAFDVNVPSYAIQNKTVHGFDGGYDVVVSNYQQLDKKVNFSNDDLIQSIESTNIDLIQV.

Active-site residues include Glu30 and Glu33. The Schiff-base intermediate with substrate; via pyruvic acid role is filled by Ser96. Ser96 carries the pyruvic acid (Ser); by autocatalysis modification. Residue Cys110 is the Proton donor; for catalytic activity of the active site. Catalysis depends on proton acceptor; for processing activity residues Ser254 and His267.

It belongs to the eukaryotic AdoMetDC family. Heterotetramer of two alpha and two beta chains. Pyruvate serves as cofactor. Is synthesized initially as an inactive proenzyme. Formation of the active enzyme involves a self-maturation process in which the active site pyruvoyl group is generated from an internal serine residue via an autocatalytic post-translational modification. Two non-identical subunits are generated from the proenzyme in this reaction, and the pyruvate is formed at the N-terminus of the alpha chain, which is derived from the carboxyl end of the proenzyme. The post-translation cleavage follows an unusual pathway, termed non-hydrolytic serinolysis, in which the side chain hydroxyl group of the serine supplies its oxygen atom to form the C-terminus of the beta chain, while the remainder of the serine residue undergoes an oxidative deamination to produce ammonia and the pyruvoyl group blocking the N-terminus of the alpha chain.

The enzyme catalyses S-adenosyl-L-methionine + H(+) = S-adenosyl 3-(methylsulfanyl)propylamine + CO2. It participates in amine and polyamine biosynthesis; S-adenosylmethioninamine biosynthesis; S-adenosylmethioninamine from S-adenosyl-L-methionine: step 1/1. S-adenosylmethionine decarboxylase is essential for the biosynthesis of spermine and spermidine. The alpha subunit contains the active site. The sequence is that of S-adenosylmethionine decarboxylase proenzyme (amd1) from Dictyostelium discoideum (Social amoeba).